Consider the following 563-residue polypeptide: Arginine--tRNA ligase (563 aa).

The 'HIGH' region signature appears at 121 to 131 (PNIAKPFSIGH).

Belongs to the class-I aminoacyl-tRNA synthetase family. Monomer.

The protein localises to the cytoplasm. It catalyses the reaction tRNA(Arg) + L-arginine + ATP = L-arginyl-tRNA(Arg) + AMP + diphosphate. This chain is Arginine--tRNA ligase, found in Streptococcus pneumoniae (strain ATCC BAA-255 / R6).